Here is a 422-residue protein sequence, read N- to C-terminus: AP-1 complex subunit mu-1-I (422 aa).

In terms of domain architecture, MHD spans Lys167 to Arg420.

This sequence belongs to the adaptor complexes medium subunit family. As to quaternary structure, adaptor protein complex 1 (AP-1) is a heterotetramer composed of two large adaptins (gamma- and beta'-type subunits), a medium adaptin (mu-type subunit AP47) and a small adaptin (sigma-type subunit AP19). Interacts (via N-terminus) with kvs-4. In terms of tissue distribution, expressed in the cholinergic motor neuron DA9.

It localises to the golgi apparatus. The protein localises to the cytoplasmic vesicle. It is found in the clathrin-coated vesicle membrane. Its subcellular location is the cell projection. The protein resides in the dendrite. In terms of biological role, component of the adaptor complexes which link clathrin to receptors in coated vesicles. Clathrin-associated protein complexes are believed to interact with the cytoplasmic tails of membrane proteins, leading to their selection and concentration. Required for many aspects of development and behavior, including negative regulation of vulval differentiation. Required for the dendritic localization of potassium channel kvs-4 in the cholinergic motor neuron DA9. This Caenorhabditis elegans protein is AP-1 complex subunit mu-1-I (unc-101).